Reading from the N-terminus, the 982-residue chain is Cell division cycle-associated protein 2 (982 aa).

The span at 75–87 shows a compositional bias: polar residues; that stretch reads VKTSSGKSTSSLQ. Residues 75–97 form a disordered region; it reads VKTSSGKSTSSLQKARRRSTVGV. S100, S122, and S133 each carry phosphoserine. Disordered regions lie at residues 192-216 and 274-315; these read SGFPVNSSSKRRRISSQDSPDNYLS and TPLS…CGSS. Polar residues-rich tracts occupy residues 207-216 and 275-315; these read SQDSPDNYLS and PLSS…CGSS. A phosphoserine mark is found at S286, S296, and S306. T309 bears the Phosphothreonine mark. A PP1-binding domain is found at 379–436; it reads KRKRVTFGEDLSPEVFDESLPANTPLCKGGTPVRPRTVKTTSPLQSPVHEQFLQPNFD. Phosphoserine is present on residues S390 and S397. Disordered regions lie at residues 400–473, 489–545, 568–638, and 651–716; these read ANTP…NTCS, TRTS…KSYR, KPLL…QSQV, and ASER…PQSQ. Residue T402 is modified to Phosphothreonine. S424 bears the Phosphoserine mark. Polar residues-rich tracts occupy residues 451–473 and 498–512; these read SFANLSLSKSSLSETPPGTNTCS and TLSSTGVCSSYTTQA. A compositionally biased stretch (basic residues) spans 518 to 545; the sequence is KMSRRKSREKKHTSAALPKKKQVLKSYR. S572 and S595 each carry phosphoserine. Residues 651–668 show a composition bias toward polar residues; the sequence is ASERGPNASTRDTGSEGN. Residues 669–685 show a composition bias toward basic and acidic residues; it reads TRAESKCQSAKEPKPGT. S735 bears the Phosphoserine mark. A Glycyl lysine isopeptide (Lys-Gly) (interchain with G-Cter in SUMO2) cross-link involves residue K741. Positions 910 to 982 are disordered; that stretch reads ECPSSKEETI…SLKGESAQLP (73 aa). S913 carries the post-translational modification Phosphoserine. The segment covering 931–942 has biased composition (low complexity); sequence VSGSESQGVGSS. Residue S950 is modified to Phosphoserine. Polar residues predominate over residues 952–964; that stretch reads CGSTLTDANSATQ. Position 973 is a phosphoserine (S973).

Interacts with PPP1CC. In terms of processing, phosphorylated by CDK1. May regulate its subcellular location.

The protein localises to the nucleus. Functionally, regulator of chromosome structure during mitosis required for condensin-depleted chromosomes to retain their compact architecture through anaphase. Acts by mediating the recruitment of phopsphatase PP1-gamma subunit (PPP1CC) to chromatin at anaphase and into the following interphase. At anaphase onset, its association with chromatin targets a pool of PPP1CC to dephosphorylate substrates. The sequence is that of Cell division cycle-associated protein 2 (Cdca2) from Mus musculus (Mouse).